The sequence spans 201 residues: FMN-dependent NADH:quinone oxidoreductase (201 aa).

Residues serine 10, 16–18, 96–99, and 140–143 contribute to the FMN site; these read SQS, MYNF, and SRGG.

This sequence belongs to the azoreductase type 1 family. Homodimer. FMN is required as a cofactor.

The enzyme catalyses 2 a quinone + NADH + H(+) = 2 a 1,4-benzosemiquinone + NAD(+). It catalyses the reaction N,N-dimethyl-1,4-phenylenediamine + anthranilate + 2 NAD(+) = 2-(4-dimethylaminophenyl)diazenylbenzoate + 2 NADH + 2 H(+). Its function is as follows. Quinone reductase that provides resistance to thiol-specific stress caused by electrophilic quinones. Also exhibits azoreductase activity. Catalyzes the reductive cleavage of the azo bond in aromatic azo compounds to the corresponding amines. In Salmonella choleraesuis (strain SC-B67), this protein is FMN-dependent NADH:quinone oxidoreductase.